The chain runs to 358 residues: NADH-quinone oxidoreductase subunit H (358 aa).

A run of 8 helical transmembrane segments spans residues 30–50 (IVIG…MIFM), 96–116 (FLYN…FSCL), 129–149 (VGIF…LLAG), 165–185 (GAQM…IVIL), 201–221 (GWFL…YLIA), 264–284 (LFII…PLHI), 297–317 (IPGF…LMWI), and 336–356 (YLVP…VFKL).

Belongs to the complex I subunit 1 family. In terms of assembly, NDH-1 is composed of 14 different subunits. Subunits NuoA, H, J, K, L, M, N constitute the membrane sector of the complex.

Its subcellular location is the cell inner membrane. It catalyses the reaction a quinone + NADH + 5 H(+)(in) = a quinol + NAD(+) + 4 H(+)(out). In terms of biological role, NDH-1 shuttles electrons from NADH, via FMN and iron-sulfur (Fe-S) centers, to quinones in the respiratory chain. The immediate electron acceptor for the enzyme in this species is believed to be ubiquinone. Couples the redox reaction to proton translocation (for every two electrons transferred, four hydrogen ions are translocated across the cytoplasmic membrane), and thus conserves the redox energy in a proton gradient. This subunit may bind ubiquinone. In Phocaeicola vulgatus (strain ATCC 8482 / DSM 1447 / JCM 5826 / CCUG 4940 / NBRC 14291 / NCTC 11154) (Bacteroides vulgatus), this protein is NADH-quinone oxidoreductase subunit H.